The sequence spans 251 residues: Phosphomannomutase (251 aa).

Residue aspartate 18 is the Nucleophile of the active site. Residues aspartate 18 and aspartate 20 each contribute to the Mg(2+) site. The Proton donor/acceptor role is filled by aspartate 20. 6 residues coordinate alpha-D-mannose 1-phosphate: arginine 27, arginine 129, arginine 140, arginine 147, serine 185, and aspartate 187. Residues aspartate 213, phenylalanine 225, aspartate 227, and threonine 230 each contribute to the Mg(2+) site.

Belongs to the eukaryotic PMM family. Homodimer. The cofactor is Mg(2+).

Its subcellular location is the cytoplasm. It carries out the reaction alpha-D-mannose 1-phosphate = D-mannose 6-phosphate. It functions in the pathway nucleotide-sugar biosynthesis; GDP-alpha-D-mannose biosynthesis; alpha-D-mannose 1-phosphate from D-fructose 6-phosphate: step 2/2. Its function is as follows. Catalyzes the interconversion of mannose-6-phosphate to mannose-1-phosphate, the precursor for the synthesis of GDP-mannose. GDP-mannose is an essential sugar nucleotide for the synthesis of D-mannose-containing cell wall polysaccharides (galactomannans and glucomannans), glycolipids, glycoproteins and the antioxidant L-ascorbate. In Galdieria sulphuraria (Red alga), this protein is Phosphomannomutase.